The primary structure comprises 542 residues: CTP synthase (542 aa).

The tract at residues 1-265 (MTRYVFITGG…DREVLGHFGL (265 aa)) is amidoligase domain. A CTP-binding site is contributed by S13. S13 is a binding site for UTP. ATP is bound by residues 14 to 19 (SLGKGL) and D71. The Mg(2+) site is built by D71 and E139. CTP contacts are provided by residues 146-148 (DIE), 186-191 (KTKPTQ), and K222. UTP-binding positions include 186 to 191 (KTKPTQ) and K222. Residues 291–541 (SIAIVGKYTG…VGAAIEQSRL (251 aa)) form the Glutamine amidotransferase type-1 domain. Residue G353 participates in L-glutamine binding. C380 acts as the Nucleophile; for glutamine hydrolysis in catalysis. Residues 381–384 (FGMQ), E404, and R469 contribute to the L-glutamine site. Residues H514 and E516 contribute to the active site.

This sequence belongs to the CTP synthase family. Homotetramer.

The enzyme catalyses UTP + L-glutamine + ATP + H2O = CTP + L-glutamate + ADP + phosphate + 2 H(+). The catalysed reaction is L-glutamine + H2O = L-glutamate + NH4(+). It carries out the reaction UTP + NH4(+) + ATP = CTP + ADP + phosphate + 2 H(+). It functions in the pathway pyrimidine metabolism; CTP biosynthesis via de novo pathway; CTP from UDP: step 2/2. Its activity is regulated as follows. Allosterically activated by GTP, when glutamine is the substrate; GTP has no effect on the reaction when ammonia is the substrate. The allosteric effector GTP functions by stabilizing the protein conformation that binds the tetrahedral intermediate(s) formed during glutamine hydrolysis. Inhibited by the product CTP, via allosteric rather than competitive inhibition. Functionally, catalyzes the ATP-dependent amination of UTP to CTP with either L-glutamine or ammonia as the source of nitrogen. Regulates intracellular CTP levels through interactions with the four ribonucleotide triphosphates. The polypeptide is CTP synthase (Methylobacterium radiotolerans (strain ATCC 27329 / DSM 1819 / JCM 2831 / NBRC 15690 / NCIMB 10815 / 0-1)).